We begin with the raw amino-acid sequence, 241 residues long: Pyridoxine 5'-phosphate synthase (241 aa).

Asn7 is a 3-amino-2-oxopropyl phosphate binding site. 9–10 (DH) is a binding site for 1-deoxy-D-xylulose 5-phosphate. Arg18 lines the 3-amino-2-oxopropyl phosphate pocket. His43 (proton acceptor) is an active-site residue. Positions 45 and 50 each coordinate 1-deoxy-D-xylulose 5-phosphate. The Proton acceptor role is filled by Glu70. 1-deoxy-D-xylulose 5-phosphate is bound at residue Thr100. His191 functions as the Proton donor in the catalytic mechanism. 3-amino-2-oxopropyl phosphate contacts are provided by residues Gly192 and 213–214 (GH).

The protein belongs to the PNP synthase family. In terms of assembly, homooctamer; tetramer of dimers.

It is found in the cytoplasm. It catalyses the reaction 3-amino-2-oxopropyl phosphate + 1-deoxy-D-xylulose 5-phosphate = pyridoxine 5'-phosphate + phosphate + 2 H2O + H(+). Its pathway is cofactor biosynthesis; pyridoxine 5'-phosphate biosynthesis; pyridoxine 5'-phosphate from D-erythrose 4-phosphate: step 5/5. Functionally, catalyzes the complicated ring closure reaction between the two acyclic compounds 1-deoxy-D-xylulose-5-phosphate (DXP) and 3-amino-2-oxopropyl phosphate (1-amino-acetone-3-phosphate or AAP) to form pyridoxine 5'-phosphate (PNP) and inorganic phosphate. The chain is Pyridoxine 5'-phosphate synthase from Nostoc punctiforme (strain ATCC 29133 / PCC 73102).